An 860-amino-acid polypeptide reads, in one-letter code: Leucine--tRNA ligase (860 aa).

A 'HIGH' region motif is present at residues 42 to 52 (PYPSGRLHMGH). The 'KMSKS' region motif lies at 619-623 (KMSKS). K622 contributes to the ATP binding site.

This sequence belongs to the class-I aminoacyl-tRNA synthetase family.

The protein localises to the cytoplasm. It catalyses the reaction tRNA(Leu) + L-leucine + ATP = L-leucyl-tRNA(Leu) + AMP + diphosphate. In Salmonella enteritidis PT4 (strain P125109), this protein is Leucine--tRNA ligase.